The chain runs to 284 residues: Protein phosphatase 1 regulatory subunit 3B (284 aa).

Positions 61–64 (RVSF) match the PP1-binding motif motif. The 109-residue stretch at 124–232 (RNRLQTNHVC…SNKGKNYRIT (109 aa)) folds into the CBM21 domain. Serine 260 is modified (phosphoserine).

Interacts with glycogen, PPP1CC catalytic subunit of PP1 and PYGL. Associates with glycogen particles. Forms complexes with debranching enzyme, glycogen phosphorylase, glycogen synthase and phosphorylase kinase which is necessary for its regulation of PP1 activity. Highly expressed in liver. Moderately expressed in kidney, heart, testis, spleen and lung. Weakly expressed in skeletal muscle (at protein level). Expressed predominantly in liver. Expressed moderately in heart. Expressed weakly in lung, kidney, spleen and skeletal muscle.

Its function is as follows. Acts as a glycogen-targeting subunit for phosphatase PP1. Facilitates interaction of the PP1 with enzymes of the glycogen metabolism and regulates its activity. Suppresses the rate at which PP1 dephosphorylates (inactivates) glycogen phosphorylase and enhances the rate at which it activates glycogen synthase and therefore limits glycogen breakdown. Its activity is inhibited by PYGL, resulting in inhibition of the glycogen synthase and glycogen phosphorylase phosphatase activities of PP1. Dramatically increases basal and insulin-stimulated glycogen synthesis upon overexpression in hepatocytes. This Rattus norvegicus (Rat) protein is Protein phosphatase 1 regulatory subunit 3B (Ppp1r3b).